The sequence spans 507 residues: MTKTYKYEDQLDFIQKSDDVKNLFIIKKGFVPNMNVEGHLFANDNLSKLLFDELKQFTDDPGSFLPALKQLANVAALPGIVKSSIALPDAHSGYGFSIGNVAAFDMDNCNSIVSPGGVGFDINCGVRLLRTNLLYKDIEPIKEQLVQKLFDLIPVGVGCQGKIPCDYGDLDNILEYGMDWSVCSGYSWAEDKEHCEDFGRMIQADPTVVSYRAKKRGLSQIGTLGAGNHYGEVQVVEEIYDEYSAKVMGIDRIGQVCIMTHSGSRGLGHQVASDALVDMENSLNKSKIKVNDKQLACARINSDEGKKYLKGMAAASNYAWVNRSVMTHLTRKAFEEVLKESADDLDMHVVYDVSHNIAKIEDHIVDGKLKRLLLHRKGSTRAFPPYHPLISADFQHIGQPVLVGGTMGTCSYVLTGTQLAMDLTLGSTCHGSGRTLSRNKSRRILDYNEVLNNLKEKGISIRVASPKLVTEEAPESYKDVSEVVQTCHDSGISKKCVKLRPVAVIKG.

Residues Asp121, Cys124, His229, His261, and His355 each contribute to the Mn(2+) site. A GMP-binding site is contributed by 228–232 (NHYGE). GMP-binding positions include 355–356 (HN), 404–407 (GGTM), Ser411, 430–433 (HGSG), and Lys506. The GMP-histidine intermediate role is filled by His430.

Belongs to the RtcB family. As to quaternary structure, catalytic component of the tRNA-splicing ligase complex. Requires Mn(2+) as cofactor.

The enzyme catalyses a 3'-end 3'-phospho-ribonucleotide-RNA + a 5'-end dephospho-ribonucleoside-RNA + GTP = a ribonucleotidyl-ribonucleotide-RNA + GMP + diphosphate. The catalysed reaction is a 3'-end 2',3'-cyclophospho-ribonucleotide-RNA + a 5'-end dephospho-ribonucleoside-RNA + GTP + H2O = a ribonucleotidyl-ribonucleotide-RNA + GMP + diphosphate + H(+). In terms of biological role, catalytic subunit of the tRNA-splicing ligase complex that acts by directly joining spliced tRNA halves to mature-sized tRNAs by incorporating the precursor-derived splice junction phosphate into the mature tRNA as a canonical 3',5'-phosphodiester. May act as an RNA ligase with broad substrate specificity, and may function toward other RNAs. The chain is RNA-splicing ligase RtcB homolog from Theileria parva (East coast fever infection agent).